A 132-amino-acid chain; its full sequence is Small ribosomal subunit protein uS12 (132 aa).

Asp89 bears the 3-methylthioaspartic acid mark. The interval 101–132 is disordered; it reads TLDASGAAGPSSTNKATRNRKRSKYGVKRPKA. Basic residues predominate over residues 117-132; it reads TRNRKRSKYGVKRPKA.

The protein belongs to the universal ribosomal protein uS12 family. Part of the 30S ribosomal subunit. Contacts proteins S8 and S17. May interact with IF1 in the 30S initiation complex.

Functionally, with S4 and S5 plays an important role in translational accuracy. Its function is as follows. Interacts with and stabilizes bases of the 16S rRNA that are involved in tRNA selection in the A site and with the mRNA backbone. Located at the interface of the 30S and 50S subunits, it traverses the body of the 30S subunit contacting proteins on the other side and probably holding the rRNA structure together. The combined cluster of proteins S8, S12 and S17 appears to hold together the shoulder and platform of the 30S subunit. In Sorangium cellulosum (strain So ce56) (Polyangium cellulosum (strain So ce56)), this protein is Small ribosomal subunit protein uS12.